The primary structure comprises 246 residues: U11/U12 small nuclear ribonucleoprotein 35 kDa protein (246 aa).

Positions 51 to 129 constitute an RRM domain; it reads LTLFVARLNL…HEIFVDYELE (79 aa). A Glycyl lysine isopeptide (Lys-Gly) (interchain with G-Cter in SUMO2) cross-link involves residue Lys172. The disordered stretch occupies residues 187–217; the sequence is SRSRERHWDSRTRDRDHDRGREKRWQEREPT. Over residues 192–217 the composition is skewed to basic and acidic residues; it reads RHWDSRTRDRDHDRGREKRWQEREPT.

Component of the U11/U12 snRNPs that are part of the U12-type spliceosome. In terms of tissue distribution, expressed in heart, liver, skeletal muscle and pancreas.

It localises to the nucleus. In Homo sapiens (Human), this protein is U11/U12 small nuclear ribonucleoprotein 35 kDa protein (SNRNP35).